The following is a 309-amino-acid chain: Probable manganese-dependent inorganic pyrophosphatase (309 aa).

His-9, Asp-13, Asp-15, Asp-75, His-97, and Asp-149 together coordinate Mn(2+).

This sequence belongs to the PPase class C family. The cofactor is Mn(2+).

It localises to the cytoplasm. It catalyses the reaction diphosphate + H2O = 2 phosphate + H(+). This chain is Probable manganese-dependent inorganic pyrophosphatase, found in Bacillus cereus (strain ZK / E33L).